The sequence spans 31 residues: Cyclotide Hyfl-A (31 aa).

Residues 1 to 31 (SISCGESCVYIPCTVTALVGCTCKDKVCYLN) constitute a cross-link (cyclopeptide (Ser-Asn)). 3 cysteine pairs are disulfide-bonded: Cys4–Cys21, Cys8–Cys23, and Cys13–Cys28.

Belongs to the cyclotide family. Bracelet subfamily. Post-translationally, this is a cyclic peptide.

Its function is as follows. Probably participates in a plant defense mechanism. The polypeptide is Cyclotide Hyfl-A (Hybanthus floribundus (Greenviolet)).